The primary structure comprises 9439 residues: Extracellular matrix-binding protein ebh (9439 aa).

29 consecutive FIVAR domains span residues 1815–1871 (ARRR…VNSA), 1901–1957 (AKEQ…INDA), 1985–2041 (AYDT…VRDA), 2071–2127 (AKKR…ITSE), 2155–2211 (AYNK…VTQA), 2241–2297 (AKNR…ISSE), 2325–2381 (AYNK…VEDA), 2411–2467 (AKEK…ITEN), 2488–2551 (DTTS…VNNA), 2581–2638 (ARNR…STEI), 2665–2720 (AKNQ…IRTN), 2748–2804 (AKTA…VSDE), 2832–2888 (AYNQ…VNNA), 2918–2974 (AKEQ…ISNA), 3002–3058 (AYNQ…VTAA), 3088–3144 (AKQQ…ITNE), 3172–3228 (AYNQ…VAQA), 3258–3314 (AKNQ…ISDE), 3335–3398 (DTTE…VNNA), 3428–3484 (ARLN…ITTE), 3512–3567 (AKTA…IKTN), 3595–3650 (IKRQ…VKES), 3678–3733 (AKNR…IRQN), 3802–3860 (SMTA…IDQK), 3928–3983 (AMTQ…LDPA), 4056–4114 (AMQA…VNQK), 4182–4240 (SMGT…VDNA), 4308–4365 (AMHT…INQK), and 4433–4491 (VMEQ…IEQA). A compositionally biased stretch (basic and acidic residues) spans 2495–2507 (EVRKLSRRGDTNN). The interval 2495–2514 (EVRKLSRRGDTNNKKPSSVS) is disordered. Residues 2925–2938 (AVDQVPSTEGMTQQ) show a composition bias toward polar residues. The disordered stretch occupies residues 2925-2951 (AVDQVPSTEGMTQQTKDDYNSKQQAAQ). The interval 4522 to 4542 (LSGLTNEQKPKENQAVNGAQT) is disordered. The 59-residue stretch at 4559-4617 (SMQTLRDLVNNQNAIHSTSNYFNEDSTQKNTYDNAIDNGSTYITGQHNPELNKSTIDQT) folds into the FIVAR 30 domain. A disordered region spans residues 4648 to 4671 (LGYLNDPQKSGEESLVNGSNTRSE). 14 consecutive FIVAR domains span residues 4685 to 4743 (AMKQ…IEQK), 4811 to 4869 (AMQA…IEQA), 4937 to 4995 (AMSN…IEQA), 5063 to 5115 (AMEA…VLDK), 5189 to 5246 (AMLG…INQL), 5314 to 5372 (LMGA…VTTA), 5440 to 5498 (AMGE…IDQA), 5566 to 5624 (AMKK…ITNA), 5692 to 5750 (AMKQ…IADT), 5818 to 5875 (DMST…LQDL), 5943 to 6000 (AMKA…IKQA), 6068 to 6126 (KMEE…INRT), 6194 to 6252 (AMQQ…IQAI), and 6320 to 6378 (EMGT…IADA). Over residues 5699–5712 (QVNQDDQISNSSPF) the composition is skewed to polar residues. A disordered region spans residues 5699–5719 (QVNQDDQISNSSPFINEDSDK). The segment at 6413–6434 (NNSQRQSEHDEINSAPSRTEVS) is disordered. FIVAR domains follow at residues 6446–6504 (AMRQ…IEDA), 6572–6630 (AMKA…INRA), 6698–6755 (SMNQ…IDQA), 6823–6877 (TMKA…ANDE), 6949–7007 (AMKK…INTI), 7075–7133 (SMNT…VERA), 7201–7259 (DMKK…IENA), 7327–7384 (AMKH…IKQL), 7452–7510 (AMEN…IEHA), 7578–7636 (AMKA…INSI), 7704–7762 (AMET…VDIV), 7830–7888 (AMKS…VRQA), 7956–8010 (VMGK…TKQA), 8078–8137 (IMGE…IDTF), 8205–8264 (AMKS…IQGL), 8332–8391 (AMKD…VLGL), 8459–8518 (KMKL…IQHL), and 8587–8643 (AMQG…ANII). Residues 9306–9324 (TVGVITLTGLLSSFWLVLA) form a helical membrane-spanning segment. Basic and acidic residues-rich tracts occupy residues 9363–9375 (DKEE…DKHS), 9386–9395 (EKQLSEEDIH), and 9404–9413 (QNSDNKDTKQ). A disordered region spans residues 9363 to 9439 (DKEEQIQNDD…VVKTKKRSKK (77 aa)). A compositionally biased stretch (basic residues) spans 9414-9439 (KKVTSKKKKTPQSTKKVVKTKKRSKK).

Its subcellular location is the cell membrane. The sequence is that of Extracellular matrix-binding protein ebh (ebh) from Staphylococcus epidermidis (strain ATCC 35984 / DSM 28319 / BCRC 17069 / CCUG 31568 / BM 3577 / RP62A).